The sequence spans 139 residues: Translation initiation factor 2 subunit beta (139 aa).

It belongs to the eIF-2-beta/eIF-5 family. As to quaternary structure, heterotrimer composed of an alpha, a beta and a gamma chain.

Functionally, eIF-2 functions in the early steps of protein synthesis by forming a ternary complex with GTP and initiator tRNA. This chain is Translation initiation factor 2 subunit beta, found in Nanoarchaeum equitans (strain Kin4-M).